The primary structure comprises 525 residues: uncharacterized protein (525 aa).

Ser55 is modified (phosphoserine). 13 consecutive transmembrane segments (helical) span residues 81-101, 120-140, 147-167, 173-193, 208-228, 238-258, 295-315, 318-338, 350-370, 388-408, 413-433, 454-474, and 484-504; these read AYIV…PNFY, LLGQ…LGPL, KLVY…CALA, LVIS…NVAG, MYMF…GTGV, WLYW…VFTP, FVFF…SLGI, GFVN…YFSI, YMAA…QCWL, FIMT…FAFC, IHYI…YHIW, AFEL…ALMF, and AVVG…YFYG.

It belongs to the major facilitator superfamily. CAR1 family.

The protein localises to the membrane. This is an uncharacterized protein from Schizosaccharomyces pombe (strain 972 / ATCC 24843) (Fission yeast).